Consider the following 45-residue polypeptide: Globin, minor monomeric component (45 aa).

In terms of domain architecture, Globin spans 1–45 (GLSAAERQVVASCWKDIAGADXGAGVGKEXLIKFISAAPEMAAVF).

The protein belongs to the globin family. As to quaternary structure, monomer.

This is Globin, minor monomeric component from Glycera dibranchiata (Bloodworm).